A 505-amino-acid chain; its full sequence is Alkylglycerol monooxygenase (505 aa).

2 consecutive transmembrane segments (helical) span residues 56-76 (VSAWWLVFLTAEFFILFISGH) and 104-124 (AVAIFLYVIVWDNWRILELPW). In terms of domain architecture, Fatty acid hydroxylase spans 130-262 (WIFCLFFQDF…FIIWDKMFNT (133 aa)). The Histidine box-1 motif lies at 145 to 149 (HRAVH). The Histidine box-2 motif lies at 158–162 (HTIHH). A Histidine box-3 motif is present at residues 234 to 238 (HRVHH). Helical transmembrane passes span 366-386 (ILVKVYVASSFLLLLAIFFHF), 396-416 (LDCTVKIAYFVVTMQCFGAFF), 430-450 (CCGVLIYYGVLMFDHIGAGTH), and 452-472 (LFVISLHIMAIALWTTDVLVE).

It belongs to the sterol desaturase family. TMEM195 subfamily. It depends on Fe cation as a cofactor.

It localises to the endoplasmic reticulum membrane. The catalysed reaction is 1-O-(1,2-saturated-alkyl)-sn-glycerol + (6R)-L-erythro-5,6,7,8-tetrahydrobiopterin + O2 = a 1-(1-hydroxyalkyl)-sn-glycerol + (6R)-L-erythro-6,7-dihydrobiopterin + H2O. In terms of biological role, glyceryl-ether monooxygenase that cleaves the O-alkyl bond of ether lipids. The chain is Alkylglycerol monooxygenase from Caenorhabditis elegans.